Consider the following 399-residue polypeptide: Presilphiperfolan-8-beta-ol synthase (399 aa).

Residues 1-60 (MAIPALEPQLHDADTSSNNMSSNSTDSGYDTNSTTPLEKSEKPNTQELKQQQLDPKRPPF) form a disordered region. Over residues 15–27 (TSSNNMSSNSTDS) the composition is skewed to low complexity. Residues 28–37 (GYDTNSTTPL) show a composition bias toward polar residues. Asp141, Asn285, and Ser289 together coordinate Mg(2+). The DDXXD motif signature appears at 141-145 (DDQFD). (2E,6E)-farnesyl diphosphate contacts are provided by Arg373 and Tyr374.

This sequence belongs to the terpene synthase family. Mg(2+) is required as a cofactor.

It carries out the reaction (2E,6E)-farnesyl diphosphate + H2O = presilphiperfolan-8beta-ol + diphosphate. The protein operates within secondary metabolite biosynthesis. Presilphiperfolan-8-beta-ol synthase; part of the gene cluster that mediates the biosynthesis of botrydial. Botrydial is necessary for colonization of plant tissue by the T4 strain. It is a strain-dependent virulence factor since highly aggressive strains like SAS56 or B05 still retain substantial virulence when botrydial synthesis is impaired, since they produce also botcinic acid. The first step of botrydial biosynthesis is performed by the sesquiterpene synthase BOT2 which catalyzes the cyclization of farnesyl diphosphate (FPP) to presilphiperfolan-8-beta-ol (PSP). The cytochrome P450 monooxygenase BOT4 then catalyzes the hydroxylation at C-4 to give a probotryane intermediate. Acetylation of the hydroxyl at C-4 is carried out by the acetyltransferase BOT5, followed by the combined action of the P450 monooxygenases BOT3 and BOT1, to yield finally the glycol, via the regio- and stereospecific hydroxylations at C-10 and C-15 of the probotryane intermediates, respectively. The cleavage of the C10-C15 bond of probotryane skeleton is an intriguing and chemically important reaction, which could be mediated by some of the monooxygenases or by a combination of them. It is possible that either BOT3 or BOT1 would oxidize either the 10- or the 15-hydroxy group to the hydroperoxide derivative, which would then undergo heterolytic fragmentation to give the dialdehyde botrydial. Finally, the dehydrogenase BOT7 might be involved in the conversion of botrydial to dihydrobotrydial. This is Presilphiperfolan-8-beta-ol synthase (BOT2) from Botryotinia fuckeliana (Noble rot fungus).